A 187-amino-acid polypeptide reads, in one-letter code: Glutathione-dependent formaldehyde-activating enzyme (187 aa).

In terms of domain architecture, CENP-V/GFA spans F20–D167. C27, C29, C48, C50, C53, C95, and C98 together coordinate Zn(2+).

Belongs to the Gfa family. Zn(2+) serves as cofactor.

It catalyses the reaction S-(hydroxymethyl)glutathione = glutathione + formaldehyde. It functions in the pathway one-carbon metabolism; formaldehyde degradation; formate from formaldehyde (glutathione route): step 1/3. Functionally, catalyzes the condensation of formaldehyde and glutathione to S-hydroxymethylglutathione. The sequence is that of Glutathione-dependent formaldehyde-activating enzyme from Bradyrhizobium sp. (strain BTAi1 / ATCC BAA-1182).